Reading from the N-terminus, the 128-residue chain is Disintegrin EO4A (128 aa).

The signal sequence occupies residues 1–20 (MIPVLLVTICLAVFPFQGSS). Positions 21–47 (IILESGNINDYEIVYPKKVNVLPTGAM) are excised as a propeptide. Residues 26-112 (GNINDYEIVY…DCPRNPYKGK (87 aa)) form the Disintegrin domain. 4 disulfides stabilise this stretch: cysteine 53–cysteine 76, cysteine 67–cysteine 73, cysteine 72–cysteine 97, and cysteine 85–cysteine 104. Positions 89–91 (RGD) match the Cell attachment site motif. A propeptide spanning residues 115-128 (PMKWPAAAKGSVLM) is cleaved from the precursor.

Belongs to the disintegrin family. Dimeric disintegrin subfamily. As to quaternary structure, heterodimer with EO5B; disulfide-linked. As to expression, expressed by the venom gland.

It is found in the secreted. Functionally, poor inhibitor of platelet aggregation. The disintegrin inhibits the adhesion of cells expressing the RGD-dependent integrin alpha-5/beta-1 (ITGA5/ITGB1) to immobilized fibronectin. Inhibition on alpha-2b/beta-3 (ITGA2B/ITGB3) is low. The protein is Disintegrin EO4A of Echis ocellatus (Ocellated saw-scaled viper).